We begin with the raw amino-acid sequence, 139 residues long: AVCVSLLGAANIPPHPFNLINFMKMIRYTIPCEKTWGEYVDYGCYCGVGGSGRPIDALDRCCYVHDNCYGDAEKKHKCNPKMQSYSYKLTKRTTSAMVPQVLVHVLSVIVTARQPSASAILNTSSGTRILTPRDIADDI.

Residues 1 to 9 (AVCVSLLGA) form the signal peptide. The propeptide occupies 10–17 (ANIPPHPF). Ca(2+) contacts are provided by Tyr45, Gly47, and Gly49. Residues Cys46 and Cys62 are joined by a disulfide bond. His65 is a catalytic residue. Asp66 serves as a coordination point for Ca(2+).

The protein belongs to the phospholipase A2 family. Group I subfamily. D49 sub-subfamily. As to quaternary structure, heterodimer; disulfide-linked. The A chains have phospholipase A2 activity and the B chains show homology with the basic protease inhibitors. Ca(2+) is required as a cofactor. In terms of tissue distribution, expressed by the venom gland.

The protein localises to the secreted. The enzyme catalyses a 1,2-diacyl-sn-glycero-3-phosphocholine + H2O = a 1-acyl-sn-glycero-3-phosphocholine + a fatty acid + H(+). In terms of biological role, snake venom phospholipase A2 (PLA2) that shows presynaptic neurotoxicity. PLA2 catalyzes the calcium-dependent hydrolysis of the 2-acyl groups in 3-sn-phosphoglycerides. In Bungarus candidus (Malayan krait), this protein is Basic phospholipase A2 beta-bungarotoxin A2 chain.